The primary structure comprises 200 residues: NADH-quinone oxidoreductase subunit C (200 aa).

The protein belongs to the complex I 30 kDa subunit family. In terms of assembly, NDH-1 is composed of 14 different subunits. Subunits NuoB, C, D, E, F, and G constitute the peripheral sector of the complex.

The protein localises to the cell inner membrane. The enzyme catalyses a quinone + NADH + 5 H(+)(in) = a quinol + NAD(+) + 4 H(+)(out). In terms of biological role, NDH-1 shuttles electrons from NADH, via FMN and iron-sulfur (Fe-S) centers, to quinones in the respiratory chain. The immediate electron acceptor for the enzyme in this species is believed to be ubiquinone. Couples the redox reaction to proton translocation (for every two electrons transferred, four hydrogen ions are translocated across the cytoplasmic membrane), and thus conserves the redox energy in a proton gradient. This chain is NADH-quinone oxidoreductase subunit C, found in Ralstonia nicotianae (strain ATCC BAA-1114 / GMI1000) (Ralstonia solanacearum).